Consider the following 228-residue polypeptide: E3 ubiquitin-protein ligase RNF114 (228 aa).

An RING-type zinc finger spans residues 29 to 68 (CPVCLEVYEKPVQVPCGHVFCSACLQECLKPKKPVCGVCR). Positions 91 and 94 each coordinate Zn(2+). A C2HC RNF-type zinc finger spans residues 91–110 (CHGCRKNFFLSKIRSHVATC). Lys-102 carries the N6-acetyllysine modification. Zn(2+) contacts are provided by His-106 and Cys-110. Lys-112 carries the post-translational modification N6-acetyllysine.

Interacts with XAF1, the interaction increases XAF1 stability and proapoptotic effects, and may regulate IFN signaling. In terms of processing, autoubiquitinated. Polyubiquitinated in the presence of E2 enzymes UBE2D1, UBE2D2 and UBE2D3, but only monoubiquitinated in the presence of UBE2E1. In terms of tissue distribution, expressed in numerous tissues, including skin, CD4 lymphocytes and dendritic cells. Highest levels in testis.

It localises to the cytoplasm. The protein localises to the nucleus. The enzyme catalyses S-ubiquitinyl-[E2 ubiquitin-conjugating enzyme]-L-cysteine + [acceptor protein]-L-lysine = [E2 ubiquitin-conjugating enzyme]-L-cysteine + N(6)-ubiquitinyl-[acceptor protein]-L-lysine.. It participates in protein modification; protein ubiquitination. In terms of biological role, E3 ubiquitin-protein ligase that promotes the ubiquitination of various substrates. In turn, participates in the regulation of many biological processes including cell cycle, apoptosis, osteoclastogenesis as well as innate or adaptive immunity. Acts as a negative regulator of NF-kappa-B-dependent transcription by promoting the ubiquitination and stabilization of the NF-kappa-B inhibitor TNFAIP3. May promote the ubiquitination of TRAF6 as well. Also acts as a negative regulator of T-cell activation. Inhibits cellular dsRNA responses and interferon production by targeting MAVS component for proteasomal degradation. Ubiquitinates the CDK inhibitor CDKN1A leading to its degradationand probably also CDKN1B and CDKN1C. This activity stimulates cell cycle G1-to-S phase transition and suppresses cellular senescence. May play a role in spermatogenesis. This is E3 ubiquitin-protein ligase RNF114 (RNF114) from Homo sapiens (Human).